We begin with the raw amino-acid sequence, 466 residues long: Alpha-1A adrenergic receptor (466 aa).

At 1-27 (MVFLSGNASDSSNCTHPPPPVNISKAI) the chain is on the extracellular side. Asparagine 7, asparagine 13, and asparagine 22 each carry an N-linked (GlcNAc...) asparagine glycan. A helical membrane pass occupies residues 28–51 (LLGVILGGLILFGVLGNILVILSV). Over 52–64 (ACHRHLHSVTHYY) the chain is Cytoplasmic. A helical transmembrane segment spans residues 65–88 (IVNLAVADLLLTSTVLPFSAIFEI). The Extracellular portion of the chain corresponds to 89 to 99 (LGYWAFGRVFC). The cysteines at positions 99 and 176 are disulfide-linked. The helical transmembrane segment at 100–122 (NVWAAVDVLCCTASIMGLCIISI) threads the bilayer. Topologically, residues 123 to 143 (DRYIGVSYPLRYPTIVTQKRG) are cytoplasmic. Residues 144-167 (LMALLCVWALSLVISIGPLFGWRQ) traverse the membrane as a helical segment. The Extracellular portion of the chain corresponds to 168–181 (PAPEDETICQINEE). The helical transmembrane segment at 182-205 (PGYVLFSALGSFYVPLTIILVMYC) threads the bilayer. The Cytoplasmic portion of the chain corresponds to 206–273 (RVYVVAKRES…FSREKKAAKT (68 aa)). Serine 215 bears the Phosphoserine; by PKA mark. Residues 274–297 (LGIVVGCFVLCWLPFFLVMPIGSF) traverse the membrane as a helical segment. Topologically, residues 298–305 (FPDFRPSE) are extracellular. A helical transmembrane segment spans residues 306 to 329 (TVFKIAFWLGYLNSCINPIIYPCS). Topologically, residues 330–466 (SQEFKKAFQN…ISLSENGEEV (137 aa)) are cytoplasmic. A Nuclear localization signal motif is present at residues 334-349 (KKAFQNVLRIQCLRRK). A lipid anchor (S-palmitoyl cysteine) is attached at cysteine 345.

The protein belongs to the G-protein coupled receptor 1 family. Adrenergic receptor subfamily. ADRA1A sub-subfamily. In terms of assembly, homo- and heterooligomer. Heterooligomerizes with ADRA1B homooligomers in cardiac myocytes. Interacts with CAVIN4.

It is found in the nucleus membrane. The protein localises to the cell membrane. The protein resides in the cytoplasm. It localises to the membrane. Its subcellular location is the caveola. Functionally, this alpha-adrenergic receptor mediates its action by association with G proteins that activate a phosphatidylinositol-calcium second messenger system. Its effect is mediated by G(q) and G(11) proteins. Nuclear ADRA1A-ADRA1B heterooligomers regulate phenylephrine (PE)-stimulated ERK signaling in cardiac myocytes. The polypeptide is Alpha-1A adrenergic receptor (ADRA1A) (Bos taurus (Bovine)).